We begin with the raw amino-acid sequence, 126 residues long: Small ribosomal subunit protein uS13 (126 aa).

The segment at H92 to K126 is disordered.

This sequence belongs to the universal ribosomal protein uS13 family. Part of the 30S ribosomal subunit. Forms a loose heterodimer with protein S19. Forms two bridges to the 50S subunit in the 70S ribosome.

Its function is as follows. Located at the top of the head of the 30S subunit, it contacts several helices of the 16S rRNA. In the 70S ribosome it contacts the 23S rRNA (bridge B1a) and protein L5 of the 50S subunit (bridge B1b), connecting the 2 subunits; these bridges are implicated in subunit movement. Contacts the tRNAs in the A and P-sites. The sequence is that of Small ribosomal subunit protein uS13 from Deinococcus geothermalis (strain DSM 11300 / CIP 105573 / AG-3a).